The chain runs to 243 residues: tRNA pseudouridine synthase A (243 aa).

Aspartate 53 (nucleophile) is an active-site residue. Tyrosine 111 contacts substrate.

Belongs to the tRNA pseudouridine synthase TruA family. As to quaternary structure, homodimer.

The catalysed reaction is uridine(38/39/40) in tRNA = pseudouridine(38/39/40) in tRNA. Formation of pseudouridine at positions 38, 39 and 40 in the anticodon stem and loop of transfer RNAs. This Chlorobium chlorochromatii (strain CaD3) protein is tRNA pseudouridine synthase A.